Consider the following 915-residue polypeptide: Probable dipeptidyl-aminopeptidase B (915 aa).

The interval 1 to 82 (MAPPFTDDPE…GAFLGPPGVP (82 aa)) is disordered. Topologically, residues 1–94 (MAPPFTDDPE…RQPMDRGFRR (94 aa)) are cytoplasmic. The segment covering 15 to 32 (STSRLSQDSLSSVSTTSL) has biased composition (low complexity). Residues 36–62 (RIQEEMDRDPSASRSARRDLLPATKDE) show a composition bias toward basic and acidic residues. The chain crosses the membrane as a helical; Signal-anchor for type II membrane protein span at residues 95-115 (ILIIIGAVFVGAWLAGLGIFV). Residues 116 to 915 (LSGSYKHESD…IDTKKRRHVS (800 aa)) lie on the Vacuolar side of the membrane. N-linked (GlcNAc...) asparagine glycosylation is found at Asn355 and Asn577. Ser760 acts as the Charge relay system in catalysis. Residue Asn819 is glycosylated (N-linked (GlcNAc...) asparagine). Catalysis depends on charge relay system residues Asp837 and His870.

This sequence belongs to the peptidase S9B family.

The protein resides in the vacuole membrane. It catalyses the reaction Release of an N-terminal dipeptide, Xaa-Yaa-|-Zaa-, from a polypeptide, preferentially when Yaa is Pro, provided Zaa is neither Pro nor hydroxyproline.. Functionally, type IV dipeptidyl-peptidase which removes N-terminal dipeptides sequentially from polypeptides having unsubstituted N-termini provided that the penultimate residue is proline. This chain is Probable dipeptidyl-aminopeptidase B (DAPB), found in Metarhizium robertsii (strain ARSEF 23 / ATCC MYA-3075) (Metarhizium anisopliae (strain ARSEF 23)).